The primary structure comprises 356 residues: cGAMP-activated phospholipase (356 aa).

The region spanning 15 to 206 (LSLNGGGARG…VANNPSYIGL (192 aa)) is the PNPLA domain. A GXGXXG motif is present at residues 19 to 24 (GGGARG). Positions 58–62 (GTSIG) match the GXSXG motif. Ser-60 acts as the Nucleophile in catalysis. The Proton acceptor role is filled by Asp-193. The DGA/G motif lies at 193-195 (DGG).

It belongs to the patatin family.

The catalysed reaction is a 1,2-diacyl-sn-glycero-3-phosphocholine + H2O = a 2-acyl-sn-glycero-3-phosphocholine + a fatty acid + H(+). It carries out the reaction 1,2-di-(9Z-octadecenoyl)-sn-glycero-3-phosphoethanolamine + 2 H2O = sn-glycero-3-phosphoethanolamine + 2 (9Z)-octadecenoate + 2 H(+). With respect to regulation, phospholipase activity is specifically activated upon 3',3'-cGAMP binding, which is produced by the cognate cyclic nucleotide synthase encoded in the same operon. Effector phospholipase of a CBASS antiviral system. CBASS (cyclic oligonucleotide-based antiphage signaling system) provides immunity against bacteriophages. The CD-NTase protein (DncV) synthesizes cyclic nucleotides in response to infection; these serve as specific second messenger signals. The signals activate a diverse range of effectors, leading to bacterial cell death and thus abortive phage infection. A type II-A(GA) CBASS system. Its function is as follows. Phospholipase that is activated upon binding to the cyclic dinucleotide (CDN) second messenger 3',3'-cyclic GMP-AMP (cGAMP). Degrades phospholipids in the cell membrane. Functionally, protects E.coli against phage infection. When capV and dncV are introduced in E.coli MG1655 there is 1000-fold protection against phage P1; protection against other phage (T2, T4, T5, T6 and lambda-vir) requires the 2 subsequent genes (cap2 and cap3). Upon P1 phage infection the activating molecule is produced between 30 and 40 minutes. Activation leads to bacterial cell lysis and death, which occurs before the phage has finished its replication cycle, thus protecting non-infected bacteria by aborting the phage infection and preventing its propagation. In another paper the capV-dncV-cap2-cap3 operon gives 10(4)-10(5)-fold protection against phages lambda, T2, T4 and T6, about 1000-fold protection against P1 and 10-fold protection against T5. In Escherichia coli (strain TW11681), this protein is cGAMP-activated phospholipase.